A 545-amino-acid chain; its full sequence is Oligopeptide-binding protein OppA (545 aa).

The first 20 residues, 1 to 20 (MKKRWSIVTLMLIFTLVLSA), serve as a signal peptide directing secretion. C21 is lipidated: N-palmitoyl cysteine. A lipid anchor (S-diacylglycerol cysteine) is attached at C21. The residue at position 470 (T470) is a Phosphothreonine.

It belongs to the bacterial solute-binding protein 5 family. In terms of assembly, the complex is composed of two ATP-binding proteins (OppD and OppF), two transmembrane proteins (OppB and OppC) and a solute-binding protein (OppA). OppA interacts with FloT in detergent-resistant membranes (DRM). Colocalizes rarely with FloT membrane assemblies.

It is found in the cell membrane. The protein resides in the membrane raft. In terms of biological role, part of the ABC transporter complex OppABCDF involved in the uptake of oligopeptides. Plays an important nutritional role. Binds peptides containing up to five amino acids residues regardless of their sequence, with highest affinity for tetra- and pentapeptides. Binds to the sporulation-promoting peptide PhrE (Ser-Arg-Asn-Val-Thr). Required for sporulation and genetic competence. The sequence is that of Oligopeptide-binding protein OppA from Bacillus subtilis (strain 168).